A 211-amino-acid polypeptide reads, in one-letter code: Uridine kinase (211 aa).

12–19 serves as a coordination point for ATP; it reads GGSGSGKT.

It belongs to the uridine kinase family.

It localises to the cytoplasm. The catalysed reaction is uridine + ATP = UMP + ADP + H(+). It carries out the reaction cytidine + ATP = CMP + ADP + H(+). Its pathway is pyrimidine metabolism; CTP biosynthesis via salvage pathway; CTP from cytidine: step 1/3. It participates in pyrimidine metabolism; UMP biosynthesis via salvage pathway; UMP from uridine: step 1/1. The protein is Uridine kinase of Bacillus velezensis (strain DSM 23117 / BGSC 10A6 / LMG 26770 / FZB42) (Bacillus amyloliquefaciens subsp. plantarum).